The following is a 229-amino-acid chain: tRNA (guanosine(18)-2'-O)-methyltransferase (229 aa).

Positions 96, 139, and 148 each coordinate S-adenosyl-L-methionine.

It belongs to the class IV-like SAM-binding methyltransferase superfamily. RNA methyltransferase TrmH family.

The enzyme catalyses guanosine(18) in tRNA + S-adenosyl-L-methionine = 2'-O-methylguanosine(18) in tRNA + S-adenosyl-L-homocysteine + H(+). Functionally, catalyzes the 2'-O methylation of guanosine at position 18 in tRNA. This Escherichia coli O157:H7 protein is tRNA (guanosine(18)-2'-O)-methyltransferase.